Consider the following 264-residue polypeptide: Transmembrane protein 41A (264 aa).

The first 17 residues, 1–17 (MRPLLGLLLVFAGCTFA), serve as a signal peptide directing secretion. 5 helical membrane-spanning segments follow: residues 67-87 (AYVF…AIPG), 100-122 (GPWL…CYLL), 153-173 (LFFF…FLNL), 175-195 (APIL…GLIP), and 219-239 (WDTV…GTLI). A VTT domain region spans residues 96–207 (GALFGPWLGL…FICVQTGSIL (112 aa)). An N-linked (GlcNAc...) asparagine glycan is attached at asparagine 250.

It belongs to the TMEM41 family.

The protein resides in the membrane. This Homo sapiens (Human) protein is Transmembrane protein 41A (TMEM41A).